The sequence spans 118 residues: Large ribosomal subunit protein bL19 (118 aa).

The protein belongs to the bacterial ribosomal protein bL19 family.

In terms of biological role, this protein is located at the 30S-50S ribosomal subunit interface and may play a role in the structure and function of the aminoacyl-tRNA binding site. This is Large ribosomal subunit protein bL19 from Dictyoglomus thermophilum (strain ATCC 35947 / DSM 3960 / H-6-12).